The following is a 516-amino-acid chain: Leucine-rich repeat transmembrane neuronal protein 2 (516 aa).

Positions 1 to 33 are cleaved as a signal peptide; that stretch reads MGLHFKWPLGAPMLAAIYAMSMVLKMLPALGMA. One can recognise an LRRNT domain in the interval 34–61; it reads CPPKCRCEKLLFYCDSQGFHSVPNATDK. The Extracellular segment spans residues 34–422; it reads CPPKCRCEKL…EPDNAIFTQR (389 aa). N-linked (GlcNAc...) asparagine glycosylation is present at asparagine 57. LRR repeat units follow at residues 63–83, 86–107, 110–131, 134–155, 158–179, 182–203, 206–227, 230–251, 254–275, and 278–299; these read SLGLSLRHNHITELERDQFAS, QLTWLHLDHNQISTVKEDAFQG, KLKELILSSNKIFYLPNTTFTQ, NLQNLDLSFNQLSSLHPELFYG, KLQTLHLRSNSLRTIPVRLFWD, SLEFLDLSTNRLRSLARNGFAG, KLRELHLEHNQLTKINFAHFLR, SLHTLFLQWNKISNLTCGMEWT, TLEKLDLTGNEIKAIDLTVFET, and NLKILLMDNNKLNSLDSKILNS. Asparagine 126 carries an N-linked (GlcNAc...) asparagine glycan. Asparagine 243 carries N-linked (GlcNAc...) asparagine glycosylation. The region spanning 311–362 is the LRRCT domain; sequence NLWECSARICALASWLGSFQGRWEHSILCHSPDHTQGEDILDAVHGFQLCWN. Asparagine 362 carries an N-linked (GlcNAc...) asparagine glycan. The chain crosses the membrane as a helical span at residues 423–443; that stretch reads VITGTMALLFSFFFIIFIVFI. Topologically, residues 444–516 are cytoplasmic; that stretch reads SRKCCPPTLR…QQLPYKECEV (73 aa). Residues 513–516 carry the Involved in DLG4-binding motif; the sequence is ECEV.

Belongs to the LRRTM family. In terms of assembly, interacts with DLG4. Interacts with neurexin NRXN1; interaction is mediated by heparan sulfate glycan modification on neurexin. As to expression, expressed in neuronal tissues.

It is found in the cell membrane. Its subcellular location is the postsynaptic cell membrane. In terms of biological role, involved in the development and maintenance of excitatory synapses in the vertebrate nervous system. Regulates surface expression of AMPA receptors and instructs the development of functional glutamate release sites. Acts as a ligand for the presynaptic receptors NRXN1-A and NRXN1-B. The protein is Leucine-rich repeat transmembrane neuronal protein 2 (LRRTM2) of Homo sapiens (Human).